Here is a 932-residue protein sequence, read N- to C-terminus: von Willebrand factor A domain-containing protein DDB_G0292028 (932 aa).

Residues 1-49 form a disordered region; the sequence is MNFIKKVIGGGSSKSKTDIKIEDEQHEQQHEQQHEKQQIPDKISTSKVN. Basic and acidic residues predominate over residues 15–39; the sequence is SKTDIKIEDEQHEQQHEQQHEKQQI. Positions 95 to 222 constitute a VIT domain; it reads LTSPGLNTKV…DVTVNITITS (128 aa). Residues 342 to 521 enclose the VWFA domain; the sequence is EFIFVLDCSG…IAMQPTLSNI (180 aa). 2 disordered regions span residues 661–752 and 800–834; these read QQIN…SQAQ and TSQI…STSS. A compositionally biased stretch (polar residues) spans 677–686; that stretch reads TRVQGSSSVF. The segment covering 815-834 has biased composition (low complexity); it reads SSSPTIQKSSSLPSRPSTSS.

The polypeptide is von Willebrand factor A domain-containing protein DDB_G0292028 (Dictyostelium discoideum (Social amoeba)).